The following is a 111-amino-acid chain: BET1-like protein (111 aa).

The Cytoplasmic segment spans residues 1 to 86 (MADWARAQSP…MARSGQDNRK (86 aa)). Phosphoserine occurs at positions 9 and 37. Positions 15-77 (EILDRENKRM…TGSVKRFSTM (63 aa)) constitute a t-SNARE coiled-coil homology domain. Residues 87–107 (LLCGMAVGLIVAFFILSYFLS) form a helical; Anchor for type IV membrane protein membrane-spanning segment. Over 108–111 (RART) the chain is Lumenal.

Component of a SNARE complex consisting of STX5, YKT6, GOSR1 and BET1L. Interacts with STX5.

It localises to the golgi apparatus membrane. Its subcellular location is the golgi apparatus. It is found in the trans-Golgi network membrane. Vesicle SNARE required for targeting and fusion of retrograde transport vesicles with the Golgi complex. Required for the integrity of the Golgi complex. This chain is BET1-like protein, found in Homo sapiens (Human).